The following is a 112-amino-acid chain: UPF0342 protein SP_1372 (112 aa).

This sequence belongs to the UPF0342 family.

The polypeptide is UPF0342 protein SP_1372 (Streptococcus pneumoniae serotype 4 (strain ATCC BAA-334 / TIGR4)).